The primary structure comprises 328 residues: Formimidoylglutamase (328 aa).

Residues His133, Asp159, His161, Asp163, Asp253, and Asp255 each coordinate Mn(2+).

Belongs to the arginase family. Mn(2+) is required as a cofactor.

The catalysed reaction is N-formimidoyl-L-glutamate + H2O = formamide + L-glutamate. It participates in amino-acid degradation; L-histidine degradation into L-glutamate; L-glutamate from N-formimidoyl-L-glutamate (hydrolase route): step 1/1. Functionally, catalyzes the conversion of N-formimidoyl-L-glutamate to L-glutamate and formamide. The polypeptide is Formimidoylglutamase (Streptococcus pyogenes serotype M28 (strain MGAS6180)).